The following is a 609-amino-acid chain: Protein alan shepard (609 aa).

The span at 1–12 (MHPRYSPAPPPL) shows a compositional bias: pro residues. The interval 1–96 (MHPRYSPAPP…ASVAAAPPTP (96 aa)) is disordered. A Phosphotyrosine modification is found at Tyr-5. Residues 13–35 (HQQQQQQPPQQQQQQMGGPHQQQ) show a composition bias toward low complexity. Residues 37-50 (GGVGPGTGHGGVGA) are compositionally biased toward gly residues. Low complexity-rich tracts occupy residues 51-68 (AVGA…NSQQ) and 83-92 (SSSAASVAAA). A phosphotyrosine mark is found at Tyr-152 and Tyr-168. A disordered region spans residues 190-252 (PATTTYGQRV…AQNQNQQGGE (63 aa)). The span at 204–252 (SPSNTNSSSSSNTGSQSGTLSTSLSNTTNTNTTMGPNGTAQNQNQQGGE) shows a compositional bias: low complexity. 2 RRM domains span residues 257–330 (TNLY…MAKQ) and 336–415 (TNLY…FADG). The interval 583-609 (MTDSEQASTAASPDEAYTQYPHQAAPK) is disordered.

Has a role in the perception of gravity. The sequence is that of Protein alan shepard from Drosophila grimshawi (Hawaiian fruit fly).